The sequence spans 406 residues: Homocysteine-responsive endoplasmic reticulum-resident ubiquitin-like domain member 2 protein (406 aa).

In terms of domain architecture, Ubiquitin-like spans 10 to 89 (VTLIIKAPNQ…HMVHLVCTSR (80 aa)). A disordered region spans residues 86-156 (CTSRTPPSSP…PQAQTDPAQS (71 aa)). Composition is skewed to low complexity over residues 87-98 (TSRTPPSSPKSS) and 109-139 (SNSN…SSSE). The span at 145 to 156 (TLPQAQTDPAQS) shows a compositional bias: polar residues. The helical transmembrane segment at 302–322 (FIMVMGAMLLVYLHQAGWFPF) threads the bilayer.

It localises to the membrane. In terms of biological role, could be involved in the unfolded protein response (UPR) pathway. This is Homocysteine-responsive endoplasmic reticulum-resident ubiquitin-like domain member 2 protein (HERPUD2) from Bos taurus (Bovine).